The chain runs to 134 residues: Large ribosomal subunit protein eL32 (134 aa).

The protein belongs to the eukaryotic ribosomal protein eL32 family.

The polypeptide is Large ribosomal subunit protein eL32 (RpL32) (Spodoptera frugiperda (Fall armyworm)).